Reading from the N-terminus, the 215-residue chain is Peptide methionine sulfoxide reductase MsrA (215 aa).

C58 is a catalytic residue.

This sequence belongs to the MsrA Met sulfoxide reductase family.

It catalyses the reaction L-methionyl-[protein] + [thioredoxin]-disulfide + H2O = L-methionyl-(S)-S-oxide-[protein] + [thioredoxin]-dithiol. It carries out the reaction [thioredoxin]-disulfide + L-methionine + H2O = L-methionine (S)-S-oxide + [thioredoxin]-dithiol. In terms of biological role, has an important function as a repair enzyme for proteins that have been inactivated by oxidation. Catalyzes the reversible oxidation-reduction of methionine sulfoxide in proteins to methionine. This chain is Peptide methionine sulfoxide reductase MsrA, found in Pseudomonas syringae pv. tomato (strain ATCC BAA-871 / DC3000).